The chain runs to 244 residues: MSFTVYPALDIRNGRVVRLLQGDYARETQYGDDVLPRAQAFADAGAQWMHLVDLDAAKAGGYTLAGTLGEIARATGLRVQTGGGVRSREDVARILDAGAARVVIGSLAVRNSEMVVGWLQEFGADRLTIALDTRQDANGIWQLPVHGWTETADATLDQLAVRYAQSGLQHLLCTDIARDGMLSGPNMALYAHLRALTPQLQVQVSGGARNLADVAAAKAAGCAGIVLGKALLEGHLHLEEALAC.

Aspartate 10 (proton acceptor) is an active-site residue. The active-site Proton donor is aspartate 132.

It belongs to the HisA/HisF family.

It is found in the cytoplasm. It carries out the reaction 1-(5-phospho-beta-D-ribosyl)-5-[(5-phospho-beta-D-ribosylamino)methylideneamino]imidazole-4-carboxamide = 5-[(5-phospho-1-deoxy-D-ribulos-1-ylimino)methylamino]-1-(5-phospho-beta-D-ribosyl)imidazole-4-carboxamide. The protein operates within amino-acid biosynthesis; L-histidine biosynthesis; L-histidine from 5-phospho-alpha-D-ribose 1-diphosphate: step 4/9. The protein is 1-(5-phosphoribosyl)-5-[(5-phosphoribosylamino)methylideneamino] imidazole-4-carboxamide isomerase of Xanthomonas euvesicatoria pv. vesicatoria (strain 85-10) (Xanthomonas campestris pv. vesicatoria).